The sequence spans 362 residues: Lipoprotein p35 (362 aa).

A signal peptide spans 1 to 30 (MKIKKIKLLKALALTGAFGIVATVPVIVSS). The N-palmitoyl cysteine moiety is linked to residue cysteine 31. Cysteine 31 carries S-diacylglycerol cysteine lipidation. Residues 33–53 (STSENNGNGNGNGGTDGNTQQ) form a disordered region.

This sequence belongs to the p35 lipoprotein family. In terms of processing, the N-terminus is blocked.

Its subcellular location is the cell membrane. Functionally, major M.penetrans antigen. This chain is Lipoprotein p35, found in Malacoplasma penetrans (Mycoplasma penetrans).